The following is a 314-amino-acid chain: Secreted frizzled-related protein 1 (314 aa).

Positions 1-31 (MGIGRSEGGRRGAALGVLLALGAALLAVGSA) are cleaved as a signal peptide. The FZ domain maps to 53-169 (TKPPQCVDIP…FPEGDVCIAM (117 aa)). 5 disulfide bridges follow: Cys-58–Cys-121, Cys-68–Cys-114, Cys-105–Cys-140, Cys-129–Cys-166, and Cys-133–Cys-157. An N-linked (GlcNAc...) asparagine glycan is attached at Asn-173. Cystine bridges form between Cys-186-Cys-256, Cys-189-Cys-258, and Cys-203-Cys-306. The NTR domain occupies 186-306 (CPPCDNELKS…FMKKMKNHEC (121 aa)).

This sequence belongs to the secreted frizzled-related protein (sFRP) family. As to quaternary structure, interacts with WNT1, WNT2 and FRZD6. Interacts with WNT4, WNT8 and MYOC. As to expression, widely expressed. Absent from lung, liver and peripheral blood leukocytes. Highest levels in heart and fetal kidney. Also expressed in testis, ovary, fetal brain and lung, leiomyomal cells, myometrial cells and vascular smooth muscle cells. Expressed in foreskin fibroblasts and in keratinocytes.

It is found in the secreted. Soluble frizzled-related proteins (sFRPS) function as modulators of Wnt signaling through direct interaction with Wnts. They have a role in regulating cell growth and differentiation in specific cell types. SFRP1 decreases intracellular beta-catenin levels. Has antiproliferative effects on vascular cells, in vitro and in vivo, and can induce, in vivo, an angiogenic response. In vascular cell cycle, delays the G1 phase and entry into the S phase. In kidney development, inhibits tubule formation and bud growth in metanephroi. Inhibits WNT1/WNT4-mediated TCF-dependent transcription. This is Secreted frizzled-related protein 1 (SFRP1) from Homo sapiens (Human).